The following is a 92-amino-acid chain: Small ribosomal subunit protein bS20 (92 aa).

The tract at residues Met1–Leu24 is disordered.

It belongs to the bacterial ribosomal protein bS20 family.

In terms of biological role, binds directly to 16S ribosomal RNA. The protein is Small ribosomal subunit protein bS20 of Paraburkholderia xenovorans (strain LB400).